The primary structure comprises 330 residues: Methylthioribose-1-phosphate isomerase (330 aa).

Substrate is bound by residues 49-51 (RGA), Arg83, and Gln179. Residue Asp220 is the Proton donor of the active site. 230–231 (NK) contributes to the substrate binding site.

Belongs to the eIF-2B alpha/beta/delta subunits family. MtnA subfamily.

The enzyme catalyses 5-(methylsulfanyl)-alpha-D-ribose 1-phosphate = 5-(methylsulfanyl)-D-ribulose 1-phosphate. Its pathway is amino-acid biosynthesis; L-methionine biosynthesis via salvage pathway; L-methionine from S-methyl-5-thio-alpha-D-ribose 1-phosphate: step 1/6. Its function is as follows. Catalyzes the interconversion of methylthioribose-1-phosphate (MTR-1-P) into methylthioribulose-1-phosphate (MTRu-1-P). The chain is Methylthioribose-1-phosphate isomerase from Thermus thermophilus (strain ATCC 27634 / DSM 579 / HB8).